The primary structure comprises 306 residues: Putative syntaxin-3 (306 aa).

The Cytoplasmic portion of the chain corresponds to Met-1–Cys-279. Residues Gln-40 to Ala-180 are required for the regulation of the defecation motor program. In terms of domain architecture, t-SNARE coiled-coil homology spans Tyr-204 to Ala-266. The helical; Anchor for type IV membrane protein transmembrane segment at Ile-280–Cys-300 threads the bilayer. The Extracellular portion of the chain corresponds to His-301–Cys-306.

The protein belongs to the syntaxin family. Expressed in body wall, pharyngeal, vulval and enteric muscles and in some head neurons.

Its subcellular location is the cell membrane. In terms of biological role, potentially involved in docking of synaptic vesicles at presynaptic active zones. Acts in the intestine to regulate anterior body muscle contractions (aBOC) and the expulsion steps during the defecation motor program (DMP). This is Putative syntaxin-3 from Caenorhabditis elegans.